The following is a 494-amino-acid chain: V-type proton ATPase subunit B (494 aa).

Arg-384 provides a ligand contact to ATP.

It belongs to the ATPase alpha/beta chains family. In terms of assembly, V-ATPase is a heteromultimeric enzyme made up of two complexes: the ATP-hydrolytic V1 complex and the proton translocation V0 complex. The V1 complex consists of three catalytic AB heterodimers that form a heterohexamer, three peripheral stalks each consisting of EG heterodimers, one central rotor including subunits D and F, and the regulatory subunits C and H. The proton translocation complex V0 consists of the proton transport subunit a, a ring of proteolipid subunits c9c'', rotary subunit d, subunits e and f, and the accessory subunits VhaAC45 and ATP6AP2.

Non-catalytic subunit of the V1 complex of vacuolar(H+)-ATPase (V-ATPase), a multisubunit enzyme composed of a peripheral complex (V1) that hydrolyzes ATP and a membrane integral complex (V0) that translocates protons. V-ATPase is responsible for acidifying and maintaining the pH of intracellular compartments and in some cell types, is targeted to the plasma membrane, where it is responsible for acidifying the extracellular environment. Essential for the proper assembly and activity of V-ATPase. The chain is V-type proton ATPase subunit B (VHA55) from Heliothis virescens (Tobacco budworm moth).